The following is a 252-amino-acid chain: Serine/threonine phosphatase stp (252 aa).

Residues 1–18 are compositionally biased toward basic and acidic residues; that stretch reads MHAEFRTDRGRIRHHNED. The segment at 1-23 is disordered; that stretch reads MHAEFRTDRGRIRHHNEDNGGVF. Residues 2–242 enclose the PPM-type phosphatase domain; that stretch reads HAEFRTDRGR…DNITVLLVER (241 aa). Mn(2+) is bound by residues Asp-36, Gly-37, Asp-194, and Asp-233.

The protein belongs to the PP2C family. The cofactor is Mn(2+).

The protein resides in the cytoplasm. Its subcellular location is the membrane. The enzyme catalyses O-phospho-L-seryl-[protein] + H2O = L-seryl-[protein] + phosphate. The catalysed reaction is O-phospho-L-threonyl-[protein] + H2O = L-threonyl-[protein] + phosphate. Protein phosphatase that dephosphorylates EF-Tu. This chain is Serine/threonine phosphatase stp (stp), found in Listeria welshimeri serovar 6b (strain ATCC 35897 / DSM 20650 / CCUG 15529 / CIP 8149 / NCTC 11857 / SLCC 5334 / V8).